The chain runs to 240 residues: Phosphatidylserine decarboxylase proenzyme (240 aa).

The active-site Schiff-base intermediate with substrate; via pyruvic acid is the Ser-209. Ser-209 is subject to Pyruvic acid (Ser); by autocatalysis.

It belongs to the phosphatidylserine decarboxylase family. PSD-A subfamily. As to quaternary structure, heterodimer of a large membrane-associated beta subunit and a small pyruvoyl-containing alpha subunit. Pyruvate serves as cofactor. Is synthesized initially as an inactive proenzyme. Formation of the active enzyme involves a self-maturation process in which the active site pyruvoyl group is generated from an internal serine residue via an autocatalytic post-translational modification. Two non-identical subunits are generated from the proenzyme in this reaction, and the pyruvate is formed at the N-terminus of the alpha chain, which is derived from the carboxyl end of the proenzyme. The post-translation cleavage follows an unusual pathway, termed non-hydrolytic serinolysis, in which the side chain hydroxyl group of the serine supplies its oxygen atom to form the C-terminus of the beta chain, while the remainder of the serine residue undergoes an oxidative deamination to produce ammonia and the pyruvoyl prosthetic group on the alpha chain.

It localises to the cell membrane. It carries out the reaction a 1,2-diacyl-sn-glycero-3-phospho-L-serine + H(+) = a 1,2-diacyl-sn-glycero-3-phosphoethanolamine + CO2. The protein operates within phospholipid metabolism; phosphatidylethanolamine biosynthesis; phosphatidylethanolamine from CDP-diacylglycerol: step 2/2. Catalyzes the formation of phosphatidylethanolamine (PtdEtn) from phosphatidylserine (PtdSer). In Mycobacterium ulcerans (strain Agy99), this protein is Phosphatidylserine decarboxylase proenzyme.